We begin with the raw amino-acid sequence, 267 residues long: Putative hydro-lyase RALTA_B1245 (267 aa).

Belongs to the D-glutamate cyclase family.

In Cupriavidus taiwanensis (strain DSM 17343 / BCRC 17206 / CCUG 44338 / CIP 107171 / LMG 19424 / R1) (Ralstonia taiwanensis (strain LMG 19424)), this protein is Putative hydro-lyase RALTA_B1245.